Here is a 119-residue protein sequence, read N- to C-terminus: Large ribosomal subunit protein bL20 (119 aa).

The protein belongs to the bacterial ribosomal protein bL20 family.

Binds directly to 23S ribosomal RNA and is necessary for the in vitro assembly process of the 50S ribosomal subunit. It is not involved in the protein synthesizing functions of that subunit. This is Large ribosomal subunit protein bL20 from Clostridium kluyveri (strain NBRC 12016).